The chain runs to 348 residues: Protein RecA (348 aa).

Glycine 65 to threonine 72 contacts ATP.

Belongs to the RecA family.

The protein resides in the cytoplasm. In terms of biological role, can catalyze the hydrolysis of ATP in the presence of single-stranded DNA, the ATP-dependent uptake of single-stranded DNA by duplex DNA, and the ATP-dependent hybridization of homologous single-stranded DNAs. It interacts with LexA causing its activation and leading to its autocatalytic cleavage. The sequence is that of Protein RecA from Saccharophagus degradans (strain 2-40 / ATCC 43961 / DSM 17024).